We begin with the raw amino-acid sequence, 270 residues long: Putative tRNA (cytidine(32)/guanosine(34)-2'-O)-methyltransferase (270 aa).

S-adenosyl-L-methionine-binding residues include Gly-53, Trp-55, Asp-78, Asp-94, and Asp-119. The Proton acceptor role is filled by Lys-159.

The protein belongs to the class I-like SAM-binding methyltransferase superfamily. RNA methyltransferase RlmE family. TRM7 subfamily.

It localises to the cytoplasm. The enzyme catalyses cytidine(32)/guanosine(34) in tRNA + 2 S-adenosyl-L-methionine = 2'-O-methylcytidine(32)/2'-O-methylguanosine(34) in tRNA + 2 S-adenosyl-L-homocysteine + 2 H(+). Its function is as follows. Methylates the 2'-O-ribose of nucleotides at positions 32 and 34 of the tRNA anticodon loop of substrate tRNAs. The polypeptide is Putative tRNA (cytidine(32)/guanosine(34)-2'-O)-methyltransferase (fsjA) (Dictyostelium discoideum (Social amoeba)).